A 201-amino-acid chain; its full sequence is NADH-ubiquinone oxidoreductase chain 6 (201 aa).

5 helical membrane-spanning segments follow: residues 4–24 (LVLF…VISV), 28–48 (VFSV…LLLL), 55–75 (LLFL…VVMI), 88–108 (FYYA…IFII), and 151–171 (LFIL…ILTL).

Belongs to the complex I subunit 6 family.

The protein localises to the mitochondrion membrane. It catalyses the reaction a ubiquinone + NADH + 5 H(+)(in) = a ubiquinol + NAD(+) + 4 H(+)(out). Functionally, core subunit of the mitochondrial membrane respiratory chain NADH dehydrogenase (Complex I) that is believed to belong to the minimal assembly required for catalysis. Complex I functions in the transfer of electrons from NADH to the respiratory chain. The immediate electron acceptor for the enzyme is believed to be ubiquinone. This Cyanidium caldarium (Red alga) protein is NADH-ubiquinone oxidoreductase chain 6 (ND6).